The chain runs to 266 residues: Hydroxyethylthiazole kinase (266 aa).

Residue Met-43 coordinates substrate. ATP contacts are provided by Arg-119 and Thr-166. Gly-193 is a substrate binding site.

This sequence belongs to the Thz kinase family. Requires Mg(2+) as cofactor.

It catalyses the reaction 5-(2-hydroxyethyl)-4-methylthiazole + ATP = 4-methyl-5-(2-phosphooxyethyl)-thiazole + ADP + H(+). It functions in the pathway cofactor biosynthesis; thiamine diphosphate biosynthesis; 4-methyl-5-(2-phosphoethyl)-thiazole from 5-(2-hydroxyethyl)-4-methylthiazole: step 1/1. In terms of biological role, catalyzes the phosphorylation of the hydroxyl group of 4-methyl-5-beta-hydroxyethylthiazole (THZ). The polypeptide is Hydroxyethylthiazole kinase (Methanococcus vannielii (strain ATCC 35089 / DSM 1224 / JCM 13029 / OCM 148 / SB)).